The primary structure comprises 448 residues: MPMFQPLKRDGLIGFEGGGDGQVLDLDTAVKDGVLGGVNGGGVGVVDEKLDLKKMIKELDLQDIPSVFICPISLEPMQDPVTLCTGQTYERLNIHKWFNLGHLTCPTTMQELWDDTVTPNKTLHHLIYTWFSQKYVLMKKRSEDVQGRAIEILGTLKKAKGQARVHALSELKQIVIAHLMARKTVVEEGGVSVISSLLGPFTSHAVGSEVVAILVSLDLDSDSKSGLMQPAKVSLIVDMLNDGSNETKINCARLIRGLVEEKGFRAELVSSHSLLVGLMRLVKDKRHRNGVSPALRLLKPISVHKQVRSLMVSIGAVPQLVDILPSLDPECLELALFVLDALCTDVEGRVAVKDSANTIPYTVRVLMRVSENCTNYALSILWSVCKLAPEECSPLAVEVGLAAKLLLVIQSGCDAALKQRSAELLKLCSLHYSDTMFISKCKLTRTIQ.

Residues 63 to 137 enclose the U-box domain; that stretch reads DIPSVFICPI…YTWFSQKYVL (75 aa). ARM repeat units lie at residues 179–219 and 221–260; these read LMAR…SLDL and SDSK…GLVE.

The enzyme catalyses S-ubiquitinyl-[E2 ubiquitin-conjugating enzyme]-L-cysteine + [acceptor protein]-L-lysine = [E2 ubiquitin-conjugating enzyme]-L-cysteine + N(6)-ubiquitinyl-[acceptor protein]-L-lysine.. It functions in the pathway protein modification; protein ubiquitination. Functionally, functions as an E3 ubiquitin ligase. This Arabidopsis thaliana (Mouse-ear cress) protein is U-box domain-containing protein 30 (PUB30).